Reading from the N-terminus, the 318-residue chain is NADH-ubiquinone oxidoreductase chain 1 (318 aa).

8 helical membrane-spanning segments follow: residues 2 to 22 (FLINVLTVTLPILPAVAFLTL), 69 to 89 (FLFTVAPILALTLALTVWAPL), 102 to 122 (LLFILAMSSLMVYSILWSGWA), 146 to 166 (MTTITLSMVLMNGSFTLTAFA), 171 to 191 (HLWLIFPMWPLMMMWFTSTLA), 222 to 242 (LFFMAEYANIIMMNALTVILF), 253 to 273 (EISTINFVMKTIILTICFLWV), and 294 to 314 (LPLTLALCMWHISILISLACI).

It belongs to the complex I subunit 1 family. In terms of assembly, core subunit of respiratory chain NADH dehydrogenase (Complex I) which is composed of 45 different subunits.

It is found in the mitochondrion inner membrane. The enzyme catalyses a ubiquinone + NADH + 5 H(+)(in) = a ubiquinol + NAD(+) + 4 H(+)(out). Functionally, core subunit of the mitochondrial membrane respiratory chain NADH dehydrogenase (Complex I) which catalyzes electron transfer from NADH through the respiratory chain, using ubiquinone as an electron acceptor. Essential for the catalytic activity and assembly of complex I. This chain is NADH-ubiquinone oxidoreductase chain 1 (MT-ND1), found in Elephas maximus (Indian elephant).